The sequence spans 587 residues: 5-aminolevulinate synthase, erythroid-specific, mitochondrial (587 aa).

Residues Met-1–Ser-49 constitute a mitochondrion transit peptide. Arg-163 lines the succinyl-CoA pocket. 2 residues coordinate pyridoxal 5'-phosphate: Cys-258 and Phe-259. The succinyl-CoA site is built by Ser-280 and Lys-299. Residues Ser-332, His-360, and Thr-388 each coordinate pyridoxal 5'-phosphate. Lys-391 is a catalytic residue. N6-(pyridoxal phosphate)lysine is present on Lys-391. Positions 420 and 421 each coordinate pyridoxal 5'-phosphate. Position 508 (Thr-508) interacts with succinyl-CoA.

This sequence belongs to the class-II pyridoxal-phosphate-dependent aminotransferase family. Homodimer. Interacts with SUCLA2. Requires pyridoxal 5'-phosphate as cofactor.

Its subcellular location is the mitochondrion inner membrane. The catalysed reaction is succinyl-CoA + glycine + H(+) = 5-aminolevulinate + CO2 + CoA. It participates in porphyrin-containing compound metabolism; protoporphyrin-IX biosynthesis; 5-aminolevulinate from glycine: step 1/1. Catalyzes the pyridoxal 5'-phosphate (PLP)-dependent condensation of succinyl-CoA and glycine to form aminolevulinic acid (ALA), with CoA and CO2 as by-products. Contributes significantly to heme formation during erythropoiesis. The chain is 5-aminolevulinate synthase, erythroid-specific, mitochondrial (ALAS2) from Pongo abelii (Sumatran orangutan).